Here is a 475-residue protein sequence, read N- to C-terminus: Ribulose bisphosphate carboxylase large chain (475 aa).

The propeptide occupies 1–2 (MS). Proline 3 is modified (N-acetylproline). Residue lysine 14 is modified to N6,N6,N6-trimethyllysine. Substrate is bound by residues asparagine 123 and threonine 173. Lysine 175 (proton acceptor) is an active-site residue. Lysine 177 serves as a coordination point for substrate. Positions 201, 203, and 204 each coordinate Mg(2+). The residue at position 201 (lysine 201) is an N6-carboxylysine. Catalysis depends on histidine 294, which acts as the Proton acceptor. Substrate contacts are provided by arginine 295, histidine 327, and serine 379.

Belongs to the RuBisCO large chain family. Type I subfamily. As to quaternary structure, heterohexadecamer of 8 large chains and 8 small chains; disulfide-linked. The disulfide link is formed within the large subunit homodimers. The cofactor is Mg(2+). Post-translationally, the disulfide bond which can form in the large chain dimeric partners within the hexadecamer appears to be associated with oxidative stress and protein turnover.

Its subcellular location is the plastid. It localises to the chloroplast. The enzyme catalyses 2 (2R)-3-phosphoglycerate + 2 H(+) = D-ribulose 1,5-bisphosphate + CO2 + H2O. The catalysed reaction is D-ribulose 1,5-bisphosphate + O2 = 2-phosphoglycolate + (2R)-3-phosphoglycerate + 2 H(+). Functionally, ruBisCO catalyzes two reactions: the carboxylation of D-ribulose 1,5-bisphosphate, the primary event in carbon dioxide fixation, as well as the oxidative fragmentation of the pentose substrate in the photorespiration process. Both reactions occur simultaneously and in competition at the same active site. The sequence is that of Ribulose bisphosphate carboxylase large chain from Psilotum nudum (Whisk fern).